The chain runs to 713 residues: Zinc finger and BTB domain-containing protein 1 (713 aa).

Lys-3 participates in a covalent cross-link: Glycyl lysine isopeptide (Lys-Gly) (interchain with G-Cter in SUMO2). Residues 24 to 91 form the BTB domain; that stretch reads CDCCIAIDDI…MYLGKIMTAP (68 aa). Glycyl lysine isopeptide (Lys-Gly) (interchain with G-Cter in SUMO2) cross-links involve residues Lys-200 and Lys-205. A C2H2-type 1; atypical zinc finger spans residues 216–242; that stretch reads FTCDSCGFGFSCEKLLDEHVLTCTNRH. Glycyl lysine isopeptide (Lys-Gly) (interchain with G-Cter in SUMO2) cross-links involve residues Lys-261, Lys-266, Lys-276, Lys-284, Lys-304, Lys-316, Lys-328, Lys-340, and Lys-346. The segment at 270–319 is disordered; it reads AEKDSSKTFSAQPDKYREDANQAPDDSASTTGSRKSTVEAGIAGEEKSRA. Ser-355 carries the post-translational modification Phosphoserine. Phosphothreonine is present on Thr-356. A Glycyl lysine isopeptide (Lys-Gly) (interchain with G-Cter in SUMO2) cross-link involves residue Lys-381. Residues 448-470 form a C2H2-type 2; atypical zinc finger; that stretch reads CACGKCGQILVKGRQLQEHAQRC. Lys-528 is covalently cross-linked (Glycyl lysine isopeptide (Lys-Gly) (interchain with G-Cter in SUMO2)). The segment at 533-558 adopts a UBZ-type zinc-finger fold; sequence PFRCPNCGQRFETENLVVEHMSSCLD. A Glycyl lysine isopeptide (Lys-Gly) (interchain with G-Cter in SUMO2) cross-link involves residue Lys-563. 5 consecutive C2H2-type zinc fingers follow at residues 578-600, 606-628, 634-656, 662-684, and 686-709; these read HFCNLCGKGFYQRCHLREHYTVH, FVCQTCGKQFLRERQLRLHNDMH, YVCSICDQGNFRKHDHVRHMISH, TICQVCFQIFPNNEQLEQHMDVH, and YTCGICGAKFNLRKDMRSHYNAKH.

As to quaternary structure, homodimer. Homodimer. Interacts (via BTB domain) with TRIM28 (unphosphorylated or phosphorylated form). Post-translationally, sumoylated with SUMO2 at Lys-328 and to a lesser extent at Lys-266. Sumoylation inhibits its transcriptional repression activity and regulates its subcellular localization. As to expression, expressed strongly in thymus and spleen, less in lymph nodes and peripheral blood mononuclear cells (PBMCs) and weakly in bone marrow. Strongly expressed in immature, but weakly in mature bone marrow-lymphocyte B.

Its subcellular location is the nucleus. The protein resides in the nucleoplasm. Functionally, acts as a transcriptional repressor. Represses cAMP-responsive element (CRE)-mediated transcriptional activation. In addition, has a role in translesion DNA synthesis. Requires for UV-inducible RAD18 loading, PCNA monoubiquitination, POLH recruitment to replication factories and efficient translesion DNA synthesis. Plays a key role in the transcriptional regulation of T lymphocyte development. In Mus musculus (Mouse), this protein is Zinc finger and BTB domain-containing protein 1 (Zbtb1).